We begin with the raw amino-acid sequence, 292 residues long: uncharacterized protein (292 aa).

The next 5 helical transmembrane spans lie at 57–77, 101–121, 143–163, 184–204, and 271–291; these read IISL…LTLI, VYVF…FNFM, LIYA…AVLI, VVIT…NFVL, and IAFL…DRGI.

Belongs to the CbiQ family.

The protein localises to the cell membrane. This is an uncharacterized protein from Methanocaldococcus jannaschii (strain ATCC 43067 / DSM 2661 / JAL-1 / JCM 10045 / NBRC 100440) (Methanococcus jannaschii).